We begin with the raw amino-acid sequence, 321 residues long: ATP phosphoribosyltransferase regulatory subunit (321 aa).

The protein belongs to the class-II aminoacyl-tRNA synthetase family. HisZ subfamily. Heteromultimer composed of HisG and HisZ subunits.

The protein resides in the cytoplasm. It functions in the pathway amino-acid biosynthesis; L-histidine biosynthesis; L-histidine from 5-phospho-alpha-D-ribose 1-diphosphate: step 1/9. Required for the first step of histidine biosynthesis. May allow the feedback regulation of ATP phosphoribosyltransferase activity by histidine. The sequence is that of ATP phosphoribosyltransferase regulatory subunit from Thiobacillus denitrificans (strain ATCC 25259 / T1).